The following is a 568-amino-acid chain: MEKYENLGLVGEGSYGMVMKCRNKDSGRIVAIKKFLESDDDKMVKKIAMREIKLLKQLRHENLVNLLEVCKKKKRWYLVFEFVDHTILDDLKLFPNGLDYQVVQKYLFQIINGIGFCHSHNIIHRDIKPENILVSQSGVVKLCDFGFARTLAAPGEVYTDYVATRWYRAPELLVGDVKYGKAVDIWAIGCLVIEMLMGQPLFPGESDIDQLHHIMTCLGNLIPRHQELFYKNPVFAGVRLPEVKDAEAEPLESRYPKLPEAVISLAKKCLHIDPDKRPFCADLLRHDFFQMDGFAERFSQELQLKIEKDARNNSLPKKSQNRKKEKDDALGEERKTLVVQDTNADPKIKDSKVFKVKGSKIDVEKMEKGSRASNANCLHDNGTNHKGLASTSLRDCSNVNIDHSRNPGTAIPPLTHNLSAVAPGINAGMGTIPGVQNYRVDEKTKKYCNPFVKPNQPPPAGIYNMNVSTSVSGEKYLLQANKKRKEYPKADVRLPELNYNHLPELRALEGIARNSRLIKKENKCLSESRIPSLAAIDLHVSSVASHQGAGSPLSDDSEADLPRMEHQH.

A Protein kinase domain is found at 4–289 (YENLGLVGEG…CADLLRHDFF (286 aa)). ATP-binding positions include 10–18 (VGEGSYGMV) and Lys33. Positions 45-51 (KKIAMRE) match the [NKR]KIAxRE motif. The Proton acceptor role is filled by Asp126. Disordered stretches follow at residues 309 to 333 (DARN…LGEE) and 545 to 568 (SHQG…EHQH). Basic and acidic residues predominate over residues 322–333 (RKKEKDDALGEE).

This sequence belongs to the protein kinase superfamily. CMGC Ser/Thr protein kinase family. CDC2/CDKX subfamily. In terms of tissue distribution, expressed in testis, kidney, lung and brain.

The protein resides in the cytoplasm. It is found in the nucleus. It catalyses the reaction L-seryl-[protein] + ATP = O-phospho-L-seryl-[protein] + ADP + H(+). It carries out the reaction L-threonyl-[protein] + ATP = O-phospho-L-threonyl-[protein] + ADP + H(+). The polypeptide is Cyclin-dependent kinase-like 2 (Mus musculus (Mouse)).